An 810-amino-acid chain; its full sequence is MSKGPGPGGSAASSAPPAATAQVLQAQPEKPQHYTYLKEFRTEQCPLFVQHKCTQHRPYTCFHWHFVNQRRRRSIRRRDGTFNYSPDVYCTKYDEATGLCPEGDECPFLHRTTGDTERRYHLRYYKTGICIHETDSKGNCTKNGLHCAFAHGPHDLRSPVYDIRELQAMEALQNGQTTVEGSIEGQSAGAASHAMIEKILSEEPRWQETAYVLGNYKTEPCKKPPRLCRQGYACPYYHNSKDRRRSPRKHKYRSSPCPNVKHGDEWGDPGKCENGDACQYCHTRTEQQFHPEIYKSTKCNDMQQAGSCPRGPFCAFAHIEPPPLSDDVQPSSAVSSPTQPGPVLYMPSAAGDSVPVSPSSPHAPDLSALLCRNSGLGSPSHLCSSPPGPSRKASNLEGLVFPGESSLAPGSYKKAPGFEREDQVGAEYLKNFKCQAKLKPHSLEPRSQEQPLLQPKQDVLGILPVGSPLTSSISSSITSSLAATPPSPAGTNSTPGMNANALPFYPTSDTVESVIESALDDLDLNEFGVAALEKTFDNSAVPHPSSVTIGGSLLQSSAPVNIPGSLGSSASFHSASPSPPVSLSSHFLQQPQGHLSQSENTFLGTSASHGSLGLNGMNSSIWEHFASGSFSPGTSPAFLSGPGAAELARLRQELDEANGTIKQWEESWKQAKQACDAWKKEAEEAGERASAAGAECELAREQRDALELRVKKLQEELERLHTVPEAQTLPAAPDLEALSLSTLYSIQKQLRVHLEQVDKAVFHMQSVKCLKCQEQTRAVLPCQHAVLCELCAEGSECPVCQPSRAHALQS.

Positions 1 to 24 (MSKGPGPGGSAASSAPPAATAQVL) are disordered. The span at 10 to 19 (SAASSAPPAA) shows a compositional bias: low complexity. C3H1-type zinc fingers lie at residues 84-113 (YSPDVYCTKYDEATGLCPEGDECPFLHRTT), 124-154 (YYKTGICIHETDSKGNCTKNGLHCAFAHGPH), 215-241 (NYKTEPCKKPPRLCRQGYACPYYHNSK), 251-285 (KYRSSPCPNVKHGDEWGDPGKCENGDACQYCHTRT), and 293-321 (IYKSTKCNDMQQAGSCPRGPFCAFAHIEP). Positions 239-265 (NSKDRRRSPRKHKYRSSPCPNVKHGDE) are disordered. S240 bears the Phosphoserine mark. The span at 241–253 (KDRRRSPRKHKYR) shows a compositional bias: basic residues. S374, S378, S385, and S394 each carry phosphoserine. Residues 478–497 (TSSLAATPPSPAGTNSTPGM) form a disordered region. Position 631 is a phosphoserine (S631). A coiled-coil region spans residues 643-727 (GAAELARLRQ…ERLHTVPEAQ (85 aa)). The RING-type; degenerate zinc finger occupies 766–801 (SVKCLKCQEQTRAVLPCQHAVLCELCAEGSECPVCQ).

This sequence belongs to the unkempt family.

Its subcellular location is the cytoplasm. Sequence-specific RNA-binding protein which plays an important role in the establishment and maintenance of the early morphology of cortical neurons during embryonic development. Acts as a translation repressor and controls a translationally regulated cell morphology program to ensure proper structuring of the nervous system. Translational control depends on recognition of its binding element within target mRNAs which consists of a mandatory UAG trimer upstream of a U/A-rich motif. Associated with polysomes. This Mus musculus (Mouse) protein is RING finger protein unkempt homolog (Unk).